Consider the following 161-residue polypeptide: DNA-binding protein inhibitor ID-4 (161 aa).

The bHLH domain maps to 52–104; sequence AAEAAADEPALCLQCDMNDCYSRLRRLVPTIPPNKKVSKVEILQHVIDYILDL. The span at 117-126 shows a compositional bias: pro residues; that stretch reads QPPPPAPPHH. The interval 117 to 161 is disordered; sequence QPPPPAPPHHPAGTCPAAPPRTPLTALNTDPAGAVNKQGDSILCR.

Heterodimer with other HLH proteins.

The protein localises to the nucleus. In terms of biological role, transcriptional regulator (lacking a basic DNA binding domain) which negatively regulates the basic helix-loop-helix (bHLH) transcription factors by forming heterodimers and inhibiting their DNA binding and transcriptional activity. Implicated in regulating a variety of cellular processes, including cellular growth, senescence, differentiation, apoptosis, angiogenesis, and neoplastic transformation. The sequence is that of DNA-binding protein inhibitor ID-4 (ID4) from Homo sapiens (Human).